The chain runs to 158 residues: Mitotic-spindle organizing protein 2 (158 aa).

Phosphoserine is present on Ser34. Residues 81 to 158 (AGQRVASDSQ…PGRSPPRSGT (78 aa)) form a disordered region. A compositionally biased stretch (gly residues) spans 110–119 (KGGGALGGGP). At Ser152 the chain carries Phosphoserine.

The protein belongs to the MOZART2 family. In terms of assembly, associates with the gamma-tubulin ring complex (gTuRC) consisting of TUBGCP2, TUBGCP3, TUBGCP4, TUBGCP5 and TUBGCP6 and gamma-tubulin TUBG1 or TUBG2; within the complex, interacts with TUBGCP2; the interaction plays a role in gTuRC activation.

Its subcellular location is the cytoplasm. The protein localises to the cytoskeleton. It localises to the microtubule organizing center. The protein resides in the centrosome. It is found in the spindle. Functionally, required for the recruitment and the assembly of the gamma-tubulin ring complex (gTuRC) at the centrosome. The gTuRC regulates the minus-end nucleation of alpha-beta tubulin heterodimers that grow into microtubule protafilaments, a critical step in centrosome duplication and spindle formation. This chain is Mitotic-spindle organizing protein 2 (MZT2), found in Bos taurus (Bovine).